The following is a 338-amino-acid chain: F420-dependent glucose-6-phosphate dehydrogenase (338 aa).

D40 provides a ligand contact to coenzyme F420-(gamma-Glu)n. The active-site Proton donor is H41. Coenzyme F420-(gamma-Glu)n contacts are provided by residues T77 and 108 to 109 (TG). Residue E110 is the Proton acceptor of the active site. Coenzyme F420-(gamma-Glu)n-binding positions include N113, 178-179 (GG), and 181-182 (VV). Substrate-binding residues include T196, K199, K260, and R284.

This sequence belongs to the F420-dependent glucose-6-phosphate dehydrogenase family. Homodimer.

The enzyme catalyses oxidized coenzyme F420-(gamma-L-Glu)(n) + D-glucose 6-phosphate + H(+) = 6-phospho-D-glucono-1,5-lactone + reduced coenzyme F420-(gamma-L-Glu)(n). In terms of biological role, catalyzes the coenzyme F420-dependent oxidation of glucose 6-phosphate (G6P) to 6-phosphogluconolactone. The chain is F420-dependent glucose-6-phosphate dehydrogenase from Gordonia bronchialis (strain ATCC 25592 / DSM 43247 / BCRC 13721 / JCM 3198 / KCTC 3076 / NBRC 16047 / NCTC 10667) (Rhodococcus bronchialis).